The sequence spans 317 residues: Aspartate carbamoyltransferase catalytic subunit (317 aa).

Carbamoyl phosphate-binding residues include arginine 66 and threonine 67. Lysine 94 provides a ligand contact to L-aspartate. Residues arginine 116, histidine 144, and glutamine 147 each contribute to the carbamoyl phosphate site. L-aspartate contacts are provided by arginine 177 and arginine 231. Glycine 272 and proline 273 together coordinate carbamoyl phosphate.

This sequence belongs to the aspartate/ornithine carbamoyltransferase superfamily. ATCase family. In terms of assembly, heterododecamer (2C3:3R2) of six catalytic PyrB chains organized as two trimers (C3), and six regulatory PyrI chains organized as three dimers (R2).

It catalyses the reaction carbamoyl phosphate + L-aspartate = N-carbamoyl-L-aspartate + phosphate + H(+). It participates in pyrimidine metabolism; UMP biosynthesis via de novo pathway; (S)-dihydroorotate from bicarbonate: step 2/3. In terms of biological role, catalyzes the condensation of carbamoyl phosphate and aspartate to form carbamoyl aspartate and inorganic phosphate, the committed step in the de novo pyrimidine nucleotide biosynthesis pathway. In Nitrobacter hamburgensis (strain DSM 10229 / NCIMB 13809 / X14), this protein is Aspartate carbamoyltransferase catalytic subunit.